The sequence spans 373 residues: Spermidine/putrescine import ATP-binding protein PotA (373 aa).

The region spanning 6–236 is the ABC transporter domain; sequence LSLSNLTKQF…PANLFTARFV (231 aa). 38–45 lines the ATP pocket; it reads GPSGCGKT.

Belongs to the ABC transporter superfamily. Spermidine/putrescine importer (TC 3.A.1.11.1) family. The complex is composed of two ATP-binding proteins (PotA), two transmembrane proteins (PotB and PotC) and a solute-binding protein (PotD).

The protein resides in the cell inner membrane. The enzyme catalyses ATP + H2O + polyamine-[polyamine-binding protein]Side 1 = ADP + phosphate + polyamineSide 2 + [polyamine-binding protein]Side 1.. Its function is as follows. Part of the ABC transporter complex PotABCD involved in spermidine/putrescine import. Responsible for energy coupling to the transport system. This Marinobacter nauticus (strain ATCC 700491 / DSM 11845 / VT8) (Marinobacter aquaeolei) protein is Spermidine/putrescine import ATP-binding protein PotA.